We begin with the raw amino-acid sequence, 325 residues long: MYNVRTDLAVESREIYKHRYNREIDGVVFEEKTVEEDIKVTNVDILNEEGAKAMEKPIGRYVTIDIPEYTHYDGGIMDEVSHVVAASLEELINLPEERTALVVGLGNWNVTPDAIGPKVVGKLMVTRHLKKVMPDIIDDSVRPVCAIAPGVLGITGIETGEIIKSLVEKIKPDLVVCIDALASRKLERVARTIQISNTGISPGAGVGNHRMQINEESLGIPVIALGVPTVVDAATIANDAMDLVLDEMINQADAGKEFYNILNNIDKNEKGMMIKSLLDPYVGDLMVTPKEIDDIIESVSKIIANGINIALQPNMVLEDINKFLN.

A propeptide spanning residues 1–7 (MYNVRTD) is cleaved from the precursor.

It belongs to the peptidase A25 family. As to quaternary structure, homotetramer. Post-translationally, autoproteolytically processed. The inactive tetrameric zymogen termed p46 autoprocesses to a smaller form termed p41, which is active only during spore germination.

The catalysed reaction is Endopeptidase action with P4 Glu or Asp, P1 preferably Glu &gt; Asp, P1' hydrophobic and P2' Ala.. Functionally, initiates the rapid degradation of small, acid-soluble proteins during spore germination. In Clostridium perfringens (strain 13 / Type A), this protein is Germination protease.